Reading from the N-terminus, the 197-residue chain is NADH-quinone oxidoreductase subunit B (197 aa).

Residues Cys-63, Cys-64, Cys-129, and Cys-159 each contribute to the [4Fe-4S] cluster site.

This sequence belongs to the complex I 20 kDa subunit family. In terms of assembly, NDH-1 is composed of 14 different subunits. Subunits NuoB, C, D, E, F, and G constitute the peripheral sector of the complex. The cofactor is [4Fe-4S] cluster.

The protein localises to the cell inner membrane. The catalysed reaction is a quinone + NADH + 5 H(+)(in) = a quinol + NAD(+) + 4 H(+)(out). NDH-1 shuttles electrons from NADH, via FMN and iron-sulfur (Fe-S) centers, to quinones in the respiratory chain. The immediate electron acceptor for the enzyme in this species is believed to be a menaquinone. Couples the redox reaction to proton translocation (for every two electrons transferred, four hydrogen ions are translocated across the cytoplasmic membrane), and thus conserves the redox energy in a proton gradient. In Bacteroides thetaiotaomicron (strain ATCC 29148 / DSM 2079 / JCM 5827 / CCUG 10774 / NCTC 10582 / VPI-5482 / E50), this protein is NADH-quinone oxidoreductase subunit B.